Reading from the N-terminus, the 85-residue chain is Protein C4 (85 aa).

The N-myristoyl glycine; by host moiety is linked to residue Gly-2. Positions 42 to 65 (LNPAPTSTPTSTRTETLSNGENSR) are disordered. Positions 44–59 (PAPTSTPTSTRTETLS) are enriched in low complexity.

It belongs to the geminiviridae protein AC4/C4 family.

The protein resides in the host cell membrane. Pathogenicity determinant. May act as a suppressor of RNA-mediated gene silencing, also known as post-transcriptional gene silencing (PTGS), a mechanism of plant viral defense that limits the accumulation of viral RNAs. This is Protein C4 from Solanum lycopersicum (Tomato).